We begin with the raw amino-acid sequence, 295 residues long: Alpha-soluble NSF attachment protein (295 aa).

Met1 bears the N-acetylmethionine mark. Ser26, Ser29, and Ser195 each carry phosphoserine.

It belongs to the SNAP family. In terms of assembly, interacts with PRKCABP, and disrupts the interaction between GRIA2 and PRKCABP, leading to the internalization of GRIA2. Found in a complex with VAMP8. Component of a SNARE-like complex that contains at least ZW10, USE1L, RINT1, STX18 and NAPA/SNAP-alpha. Interacts with VTI1A. Interacts with STX12. Interacts with GNA12 (via N-terminus); the interaction promotes CDH5 localization to plasma membrane.

It is found in the cell membrane. In terms of biological role, required for vesicular transport between the endoplasmic reticulum and the Golgi apparatus. Together with GNA12 promotes CDH5 localization to plasma membrane. The protein is Alpha-soluble NSF attachment protein (NAPA) of Homo sapiens (Human).